Here is a 126-residue protein sequence, read N- to C-terminus: Large ribosomal subunit protein bL12 (126 aa).

Belongs to the bacterial ribosomal protein bL12 family. Homodimer. Part of the ribosomal stalk of the 50S ribosomal subunit. Forms a multimeric L10(L12)X complex, where L10 forms an elongated spine to which 2 to 4 L12 dimers bind in a sequential fashion. Binds GTP-bound translation factors.

Functionally, forms part of the ribosomal stalk which helps the ribosome interact with GTP-bound translation factors. Is thus essential for accurate translation. The protein is Large ribosomal subunit protein bL12 of Acidobacterium capsulatum (strain ATCC 51196 / DSM 11244 / BCRC 80197 / JCM 7670 / NBRC 15755 / NCIMB 13165 / 161).